Reading from the N-terminus, the 398-residue chain is L-talarate/galactarate dehydratase (398 aa).

Substrate contacts are provided by residues 46–48, 82–83, and K195; these read DAK and KR. The active-site Proton acceptor is K197. Residue D226 participates in Mg(2+) binding. A substrate-binding site is contributed by N228. Residues E252 and E278 each contribute to the Mg(2+) site. The active-site Proton donor/acceptor is H328. E348 is a binding site for substrate.

It belongs to the mandelate racemase/muconate lactonizing enzyme family. In terms of assembly, homooctamer; tetramer of dimers. Requires Mg(2+) as cofactor.

It carries out the reaction L-altrarate = 5-dehydro-4-deoxy-D-glucarate + H2O. The catalysed reaction is galactarate = 5-dehydro-4-deoxy-D-glucarate + H2O. The enzyme catalyses L-altrarate = galactarate. Competitively inhibited by tartronate. In terms of biological role, catalyzes the efficient dehydration of both L-talarate (also called L-altrarate) and galactarate to 5-keto-4-deoxy-D-glucarate (5-KDG). Also catalyzes the epimerization of L-talarate to galactarate; epimerization occurs in competition with dehydration. Is required for the utilization of L-talarate as a carbon source. Also functions in galactarate utilization. Is not active on other acid sugars. This Salmonella typhimurium (strain LT2 / SGSC1412 / ATCC 700720) protein is L-talarate/galactarate dehydratase.